The primary structure comprises 218 residues: Cytidylate kinase (218 aa).

Residue 11–19 coordinates ATP; that stretch reads GPGASGKGT.

It belongs to the cytidylate kinase family. Type 1 subfamily.

The protein localises to the cytoplasm. It catalyses the reaction CMP + ATP = CDP + ADP. The enzyme catalyses dCMP + ATP = dCDP + ADP. The polypeptide is Cytidylate kinase (Neisseria gonorrhoeae (strain ATCC 700825 / FA 1090)).